Reading from the N-terminus, the 120-residue chain is Glycine cleavage system H protein (120 aa).

A Lipoyl-binding domain is found at 17–99 (VATVGITNYA…QGAGWFFKLK (83 aa)). The residue at position 58 (Lys58) is an N6-lipoyllysine.

The protein belongs to the GcvH family. The glycine cleavage system is composed of four proteins: P, T, L and H. (R)-lipoate serves as cofactor.

Its function is as follows. The glycine cleavage system catalyzes the degradation of glycine. The H protein shuttles the methylamine group of glycine from the P protein to the T protein. This chain is Glycine cleavage system H protein, found in Rhizobium etli (strain ATCC 51251 / DSM 11541 / JCM 21823 / NBRC 15573 / CFN 42).